A 241-amino-acid polypeptide reads, in one-letter code: MQNNNDILKAQSPAALAEEYIVKSIWQDVFPSGSNLPSERDLADKIGVTRTTLREVLQRLARDGWLTIQHGKPTKVNNIWDAAGPNIIETLIALDMQSAPLIIDNMLSLRSKMSESYIYEAVKNSPQKSTALFAELEQLQNTAQDYTEFDYQLFRQFTVVANKPFYRLIFNSLKGVYQRIGLLFFKEKKHRELTKQFYLEMQQICLEGNADAVVDCIRKHNLRSSTYWKAILERLPQNLSD.

An HTH gntR-type domain is found at Q11–I79. Positions E39–Q58 form a DNA-binding region, H-T-H motif.

Homodimer.

It is found in the cytoplasm. Its function is as follows. Multifunctional regulator of fatty acid metabolism. This chain is Fatty acid metabolism regulator protein, found in Haemophilus influenzae (strain 86-028NP).